The chain runs to 427 residues: V-type proton ATPase subunit C 2 (427 aa).

Residues Pro-298 to Gly-320 form a disordered region.

It belongs to the V-ATPase C subunit family. V-ATPase is a heteromultimeric enzyme made up of two complexes: the ATP-hydrolytic V1 complex and the proton translocation V0 complex. The V1 complex consists of three catalytic AB heterodimers that form a heterohexamer, three peripheral stalks each consisting of EG heterodimers, one central rotor including subunits D and F, and the regulatory subunits C and H. The proton translocation complex V0 consists of the proton transport subunit a, a ring of proteolipid subunits c9c'', rotary subunit d, subunits e and f, and the accessory subunits ATP6AP1/Ac45 and ATP6AP2/PRR. Predominantly expressed in the lung and kidney. Isoform 1 is lung-specific while isoform 3 is a kidney-specific isoform. Isoform 1 is localized in the lamellar bodies of type II alveolar cells. Isoform 2 is strongly expressed in the cortical and medulla collecting ducts and is found in the plasma membranes of renal alpha and beta intercalated cells.

In terms of biological role, subunit of the V1 complex of vacuolar(H+)-ATPase (V-ATPase), a multisubunit enzyme composed of a peripheral complex (V1) that hydrolyzes ATP and a membrane integral complex (V0) that translocates protons. V-ATPase is responsible for acidifying and maintaining the pH of intracellular compartments and in some cell types, is targeted to the plasma membrane, where it is responsible for acidifying the extracellular environment. Subunit C is necessary for the assembly of the catalytic sector of the enzyme and is likely to have a specific function in its catalytic activity. The chain is V-type proton ATPase subunit C 2 (Atp6v1c2) from Mus musculus (Mouse).